The primary structure comprises 366 residues: Peptide chain release factor 1 (366 aa).

Q239 carries the N5-methylglutamine modification.

Belongs to the prokaryotic/mitochondrial release factor family. In terms of processing, methylated by PrmC. Methylation increases the termination efficiency of RF1.

Its subcellular location is the cytoplasm. Functionally, peptide chain release factor 1 directs the termination of translation in response to the peptide chain termination codons UAG and UAA. This Albidiferax ferrireducens (strain ATCC BAA-621 / DSM 15236 / T118) (Rhodoferax ferrireducens) protein is Peptide chain release factor 1.